The sequence spans 92 residues: MARVLVVTTVYPSSPEINLDELVEKIKSKLPSDYEITRYDKVPIAFGLNALKLYVIIPEESEGGTSKLEEILQSVEGVEEIEVEAVHRISEY.

This sequence belongs to the EF-1-beta/EF-1-delta family.

In terms of biological role, promotes the exchange of GDP for GTP in EF-1-alpha/GDP, thus allowing the regeneration of EF-1-alpha/GTP that could then be used to form the ternary complex EF-1-alpha/GTP/AAtRNA. This is Elongation factor 1-beta from Hyperthermus butylicus (strain DSM 5456 / JCM 9403 / PLM1-5).